Consider the following 336-residue polypeptide: DNA-directed RNA polymerase subunit alpha (336 aa).

Residues M1 to E232 form an alpha N-terminal domain (alpha-NTD) region. Residues F248–Y336 form an alpha C-terminal domain (alpha-CTD) region.

This sequence belongs to the RNA polymerase alpha chain family. Homodimer. The RNAP catalytic core consists of 2 alpha, 1 beta, 1 beta' and 1 omega subunit. When a sigma factor is associated with the core the holoenzyme is formed, which can initiate transcription.

It catalyses the reaction RNA(n) + a ribonucleoside 5'-triphosphate = RNA(n+1) + diphosphate. Its function is as follows. DNA-dependent RNA polymerase catalyzes the transcription of DNA into RNA using the four ribonucleoside triphosphates as substrates. This is DNA-directed RNA polymerase subunit alpha from Chelativorans sp. (strain BNC1).